The following is a 69-amino-acid chain: Conotoxin Cal12.1p5 (69 aa).

A propeptide spanning residues 1–23 is cleaved from the precursor; that stretch reads DLITNSYTRGKPRHVTSWRNLKT.

Post-translationally, contains 4 disulfide bonds. As to expression, expressed by the venom duct.

The protein localises to the secreted. This chain is Conotoxin Cal12.1p5, found in Californiconus californicus (California cone).